Here is a 155-residue protein sequence, read N- to C-terminus: uncharacterized protein (155 aa).

The HTH asnC-type domain occupies 4 to 65 (IDEVDEIILR…IIDHSFLGEF (62 aa)). Residues 23–42 (LTELSRKVGLTPAAIKNRVE) constitute a DNA-binding region (H-T-H motif).

This is an uncharacterized protein from Pyrococcus furiosus (strain ATCC 43587 / DSM 3638 / JCM 8422 / Vc1).